The primary structure comprises 56 residues: uncharacterized protein (56 aa).

The chain crosses the membrane as a helical span at residues 2-22 (ILYIIVAISILLNIILGIKVI).

It localises to the membrane. This is an uncharacterized protein from Methanocaldococcus jannaschii (strain ATCC 43067 / DSM 2661 / JAL-1 / JCM 10045 / NBRC 100440) (Methanococcus jannaschii).